A 482-amino-acid polypeptide reads, in one-letter code: Long chain base biosynthesis protein 1c (482 aa).

Residues 33–53 (FGIHIDGHLVVEGLLIAAILF) form a helical membrane-spanning segment.

It belongs to the class-II pyridoxal-phosphate-dependent aminotransferase family. As to quaternary structure, heterodimer with LCB2. Component of the serine palmitoyltransferase (SPT) complex, composed of LCB1 and LCB2. Requires pyridoxal 5'-phosphate as cofactor.

The protein localises to the endoplasmic reticulum membrane. It catalyses the reaction L-serine + hexadecanoyl-CoA + H(+) = 3-oxosphinganine + CO2 + CoA. It participates in lipid metabolism; sphingolipid metabolism. Serine palmitoyltransferase (SPT). The heterodimer formed with LCB2 constitutes the catalytic core. The sequence is that of Long chain base biosynthesis protein 1c from Oryza sativa subsp. japonica (Rice).